Here is a 352-residue protein sequence, read N- to C-terminus: Histidine biosynthesis bifunctional protein HisB (352 aa).

The tract at residues 1–164 (MSQKILFIDR…EIENEILSSF (164 aa)) is histidinol-phosphatase. D9 acts as the Nucleophile in catalysis. Mg(2+) is bound by residues D9 and D11. The active-site Proton donor is D11. Zn(2+)-binding residues include C93, H95, C101, and C103. D130 is a Mg(2+) binding site. The imidazoleglycerol-phosphate dehydratase stretch occupies residues 165–352 (RSASYQRTTK…ENLASSKGVI (188 aa)).

The protein in the N-terminal section; belongs to the histidinol-phosphatase family. This sequence in the C-terminal section; belongs to the imidazoleglycerol-phosphate dehydratase family. The cofactor is Mg(2+). Requires Zn(2+) as cofactor.

The protein localises to the cytoplasm. It carries out the reaction D-erythro-1-(imidazol-4-yl)glycerol 3-phosphate = 3-(imidazol-4-yl)-2-oxopropyl phosphate + H2O. It catalyses the reaction L-histidinol phosphate + H2O = L-histidinol + phosphate. It participates in amino-acid biosynthesis; L-histidine biosynthesis; L-histidine from 5-phospho-alpha-D-ribose 1-diphosphate: step 6/9. The protein operates within amino-acid biosynthesis; L-histidine biosynthesis; L-histidine from 5-phospho-alpha-D-ribose 1-diphosphate: step 8/9. The protein is Histidine biosynthesis bifunctional protein HisB of Campylobacter jejuni subsp. doylei (strain ATCC BAA-1458 / RM4099 / 269.97).